The sequence spans 522 residues: Subtilisin-like protease 10 (522 aa).

Positions 1–19 (MFFFKGVVAVLSFFSAVNA) are cleaved as a signal peptide. A propeptide spanning residues 20–117 (APFMKPNNGT…VERDQIGTSQ (98 aa)) is cleaved from the precursor. The 78-residue stretch at 36-113 (SYIVLLKRDI…HVAHVERDQI (78 aa)) folds into the Inhibitor I9 domain. The Peptidase S8 domain maps to 127 to 405 (NWGLGRLSNN…KLLVNGANGT (279 aa)). Active-site charge relay system residues include aspartate 159 and histidine 190. The N-linked (GlcNAc...) asparagine glycan is linked to asparagine 251. The active-site Charge relay system is the serine 348. Positions 384–397 (ASVKNPGPNTTNKL) are enriched in polar residues. Residues 384–515 (ASVKNPGPNT…GWNRPMWWNR (132 aa)) form a disordered region. Asparagine 392 and asparagine 403 each carry an N-linked (GlcNAc...) asparagine glycan. Residues 432–459 (SQNPPPGQNPPPGQNPPPEQPAPSPPAN) are compositionally biased toward pro residues.

This sequence belongs to the peptidase S8 family.

It localises to the secreted. Secreted subtilisin-like serine protease with keratinolytic activity that contributes to pathogenicity. The polypeptide is Subtilisin-like protease 10 (SUB10) (Arthroderma benhamiae (strain ATCC MYA-4681 / CBS 112371) (Trichophyton mentagrophytes)).